A 338-amino-acid chain; its full sequence is Clavatol oxidase claD (338 aa).

The 107-residue stretch at 193–299 folds into the Fe2OG dioxygenase domain; sequence DPMSLLRLLH…RYSVVFFYDG (107 aa). 3 residues coordinate Fe cation: H222, D224, and H280. R290 lines the 2-oxoglutarate pocket.

It belongs to the iron/ascorbate-dependent oxidoreductase family. Fe(2+) serves as cofactor.

It carries out the reaction clavatol + 2-oxoglutarate + O2 = hydroxyclavatol + succinate + CO2. It functions in the pathway secondary metabolite biosynthesis. Functionally, 2-oxoglutarate-dependent dioxygenase; part of the cla gene cluster that produces clavatol and ortho-quinone methide. The clavatol biosynthesis cluster cla and the terrestric acid cluster tra are both involved in the production of peniphenones and penilactones. The non-reducing PKS claF is responsible for the formation of clavatol from successive condensations of 3 malonyl-CoA units, presumably with a simple acetyl-CoA starter unit, and 2 methylation steps. The esterase claE probably collaborates with claF by catalyzing the hydrolysis of ACP-bound acyl intermediates to free the ACP from stalled intermediates. The clavatol oxidase claD then converts clavatol to hydroxyclavatol. Spontaneous dehydration of hydroxyclavatol leads to the accumulation of the highly active ortho-quinone methide. On the other hand, the PKS-NRPS hybrid traA is involved in the formation of crustosic acid, with the help of traB and traD. The polyketide synthase module (PKS) of traA is responsible for the synthesis of the polyketide backbone via the condensation of an acetyl-CoA starter unit with 3 malonyl-CoA units. The downstream nonribosomal peptide synthetase (NRPS) module then amidates the carboxyl end of the polyketide with L-malic acid. Because traA lacks a designated enoylreductase (ER) domain, the required activity is provided the enoyl reductase traG. Crustosic acid undergoes decarboxylation and isomerization to the terrestric acid, catalyzed by the 2-oxoglutarate-dependent dioxygenase traH. Both acids are further converted to the 2 gamma-butyrolactones (R)-5-methyltetronic acid and (S)-5-carboxylmethyltetronic acid, with involvement of the cytochrome P450 monooxygenase claJ. Spontaneous addition of the methide to these gamma-butyrolactones leads to peniphenone D and penilactone D, which undergo again stereospecific attacking by methide to give penilactones A and B. This chain is Clavatol oxidase claD, found in Penicillium crustosum (Blue mold fungus).